Consider the following 21-residue polypeptide: Dart gland peptide (21 aa).

A disordered region spans residues 1–21 (SINNTGGSGNRRLDKNGFAGQ). N3 carries an N-linked (GlcNAc...) asparagine glycan.

The protein resides in the secreted. This chain is Dart gland peptide, found in Cornu aspersum (Brown garden snail).